Here is a 288-residue protein sequence, read N- to C-terminus: Bifunctional protein FolD (288 aa).

Residues 165 to 167 (GRS), Ser-190, and Ile-231 contribute to the NADP(+) site.

It belongs to the tetrahydrofolate dehydrogenase/cyclohydrolase family. Homodimer.

It carries out the reaction (6R)-5,10-methylene-5,6,7,8-tetrahydrofolate + NADP(+) = (6R)-5,10-methenyltetrahydrofolate + NADPH. It catalyses the reaction (6R)-5,10-methenyltetrahydrofolate + H2O = (6R)-10-formyltetrahydrofolate + H(+). The protein operates within one-carbon metabolism; tetrahydrofolate interconversion. Catalyzes the oxidation of 5,10-methylenetetrahydrofolate to 5,10-methenyltetrahydrofolate and then the hydrolysis of 5,10-methenyltetrahydrofolate to 10-formyltetrahydrofolate. This is Bifunctional protein FolD from Nitrosospira multiformis (strain ATCC 25196 / NCIMB 11849 / C 71).